We begin with the raw amino-acid sequence, 660 residues long: DNA ligase (660 aa).

Residues 33-37 (DFVYD), 82-83 (SL), and glutamate 110 contribute to the NAD(+) site. The active-site N6-AMP-lysine intermediate is the lysine 112. NAD(+) contacts are provided by arginine 133, glutamate 167, lysine 281, and lysine 305. Zn(2+) is bound by residues cysteine 396, cysteine 399, cysteine 412, and cysteine 417. The BRCT domain occupies 583-660 (GENKLLAGKK…SFEDIKSYLD (78 aa)).

Belongs to the NAD-dependent DNA ligase family. LigA subfamily. Mg(2+) serves as cofactor. It depends on Mn(2+) as a cofactor.

The catalysed reaction is NAD(+) + (deoxyribonucleotide)n-3'-hydroxyl + 5'-phospho-(deoxyribonucleotide)m = (deoxyribonucleotide)n+m + AMP + beta-nicotinamide D-nucleotide.. DNA ligase that catalyzes the formation of phosphodiester linkages between 5'-phosphoryl and 3'-hydroxyl groups in double-stranded DNA using NAD as a coenzyme and as the energy source for the reaction. It is essential for DNA replication and repair of damaged DNA. The polypeptide is DNA ligase (Borreliella burgdorferi (strain ZS7) (Borrelia burgdorferi)).